Reading from the N-terminus, the 376-residue chain is Putative E3 ubiquitin-protein ligase XBAT34 (376 aa).

ANK repeat units follow at residues 41–71 and 77–106; these read LGRT…NVNA and NGGT…NPLV. Residues 325 to 364 form an RING-type zinc finger; that stretch reads CVICVDAPSEAVCVPCGHVAGCISCLKEIENKKMGCPVCR.

The enzyme catalyses S-ubiquitinyl-[E2 ubiquitin-conjugating enzyme]-L-cysteine + [acceptor protein]-L-lysine = [E2 ubiquitin-conjugating enzyme]-L-cysteine + N(6)-ubiquitinyl-[acceptor protein]-L-lysine.. The protein operates within protein modification; protein ubiquitination. Its function is as follows. No E3 ubiquitin-protein ligase activity observed when associated with the E2 enzyme UBC8 in vitro. This Arabidopsis thaliana (Mouse-ear cress) protein is Putative E3 ubiquitin-protein ligase XBAT34 (XBAT34).